The chain runs to 414 residues: Sec-independent protein translocase protein TatC (414 aa).

The interval 1–21 (MTQSTSVSKGGRVSRKAKKNP) is disordered. The next 6 helical transmembrane spans lie at 45-65 (IAVTTIIGFIWYEHGIPAWAI), 119-139 (GGLAGLVMACPIWLIEIWRFI), 157-177 (IAGFLFVLGVVAAYLVLPMGL), 200-220 (FVIALILVFGLSFEVPLFTAM), 238-258 (IMIVVIFIFAAIATPGQDPIS), and 259-279 (MLVLALTLVVLMELALQFTRI). The interval 315-414 (IYDGDHKGIA…IQSSSFDDVL (100 aa)) is disordered. Residues 323–336 (IAGGGDAHPAGGSG) are compositionally biased toward gly residues. Positions 345-357 (TAPTRAPSASESP) are enriched in low complexity. Over residues 403-414 (DTIQSSSFDDVL) the composition is skewed to polar residues.

It belongs to the TatC family. As to quaternary structure, the Tat system comprises two distinct complexes: a TatABC complex, containing multiple copies of TatA, TatB and TatC subunits, and a separate TatA complex, containing only TatA subunits. Substrates initially bind to the TatABC complex, which probably triggers association of the separate TatA complex to form the active translocon.

Its subcellular location is the cell membrane. Functionally, part of the twin-arginine translocation (Tat) system that transports large folded proteins containing a characteristic twin-arginine motif in their signal peptide across membranes. Together with TatB, TatC is part of a receptor directly interacting with Tat signal peptides. This Corynebacterium kroppenstedtii (strain DSM 44385 / JCM 11950 / CIP 105744 / CCUG 35717) protein is Sec-independent protein translocase protein TatC.